Reading from the N-terminus, the 184-residue chain is Ribosome-recycling factor (184 aa).

A disordered region spans residues 141–165 (DEKNGDITEDDLRSQTDDVQKATDN).

Belongs to the RRF family.

Its subcellular location is the cytoplasm. In terms of biological role, responsible for the release of ribosomes from messenger RNA at the termination of protein biosynthesis. May increase the efficiency of translation by recycling ribosomes from one round of translation to another. The polypeptide is Ribosome-recycling factor (Staphylococcus epidermidis (strain ATCC 35984 / DSM 28319 / BCRC 17069 / CCUG 31568 / BM 3577 / RP62A)).